The sequence spans 459 residues: 4,4'-diaponeurosporen-aldehyde dehydrogenase (459 aa).

Residues 114–115 (FN) and 188–189 (GS) contribute to the NAD(+) site. The active-site Proton acceptor is glutamate 210. Methionine 211 is a binding site for NAD(+). Cysteine 244 acts as the Nucleophile in catalysis. Glutamate 336 is an NAD(+) binding site.

The protein belongs to the aldehyde dehydrogenase family.

It catalyses the reaction 4,4'-diaponeurosporenal + NAD(+) + H2O = 4,4'-diaponeurosporenoate + NADH + 2 H(+). The protein operates within carotenoid biosynthesis; staphyloxanthin biosynthesis; staphyloxanthin from farnesyl diphosphate. Involved in the biosynthesis of the yellow-orange carotenoid staphyloxanthin, which plays a role in the virulence via its protective function against oxidative stress. Catalyzes the oxidation of 4,4'-diaponeurosporen-4-al to yield 4,4'-diaponeurosporenoic acid. This chain is 4,4'-diaponeurosporen-aldehyde dehydrogenase, found in Staphylococcus aureus (strain NCTC 8325 / PS 47).